The primary structure comprises 317 residues: Annexin D2 (317 aa).

Ala2 is subject to N-acetylalanine. Annexin repeat units follow at residues 11-82 (PLPE…LWTL), 83-154 (DPPE…PLVS), 166-238 (MLAR…AVIT), and 242-313 (YPEK…ALLG). 4 residues coordinate Ca(2+): Phe24, Gly26, Gly28, and Glu68. Ser95 is modified (phosphoserine). Residues Thr100 and Thr112 each carry the phosphothreonine modification. Position 129 is a phosphotyrosine (Tyr129). Residues Ile255 and Gly259 each contribute to the Ca(2+) site. Tyr284 is subject to Phosphotyrosine. Ser289 is subject to Phosphoserine. 3 residues coordinate Ca(2+): Asp299, Thr300, and Glu305.

It belongs to the annexin (TC 1.A.31.1) family. Expressed mainly in roots and flowers. Low in stems and bearly detectable in leaves.

Its subcellular location is the cytoplasm. It localises to the cytosol. The protein localises to the membrane. In terms of biological role, may mediate regulated, targeted secretion of Golgi-derived vesicles during seedling development. This is Annexin D2 (ANN2) from Arabidopsis thaliana (Mouse-ear cress).